A 679-amino-acid chain; its full sequence is DNA ligase (679 aa).

NAD(+)-binding positions include Asp43 to Asp47, Ser92 to Met93, and Glu124. The active-site N6-AMP-lysine intermediate is the Lys126. 4 residues coordinate NAD(+): Arg147, Glu181, Lys297, and Lys321. 4 residues coordinate Zn(2+): Cys415, Cys418, Cys433, and Cys438. A BRCT domain is found at Thr599–Asn679.

Belongs to the NAD-dependent DNA ligase family. LigA subfamily. It depends on Mg(2+) as a cofactor. Mn(2+) serves as cofactor.

It carries out the reaction NAD(+) + (deoxyribonucleotide)n-3'-hydroxyl + 5'-phospho-(deoxyribonucleotide)m = (deoxyribonucleotide)n+m + AMP + beta-nicotinamide D-nucleotide.. Its function is as follows. DNA ligase that catalyzes the formation of phosphodiester linkages between 5'-phosphoryl and 3'-hydroxyl groups in double-stranded DNA using NAD as a coenzyme and as the energy source for the reaction. It is essential for DNA replication and repair of damaged DNA. The polypeptide is DNA ligase (Limosilactobacillus fermentum (strain NBRC 3956 / LMG 18251) (Lactobacillus fermentum)).